A 514-amino-acid polypeptide reads, in one-letter code: Zinc finger and BTB domain-containing protein 2 (514 aa).

Positions 24 to 89 (CDCTVAIGDV…MYTGKMAPQL (66 aa)) constitute a BTB domain. Glycyl lysine isopeptide (Lys-Gly) (interchain with G-Cter in SUMO2) cross-links involve residues K147 and K154. The interval 149 to 231 (ASAPEKLGRD…LEASSSDEQP (83 aa)) is disordered. Polar residues-rich tracts occupy residues 161-200 (PQTS…PLQT) and 222-231 (LEASSSDEQP). The C2H2-type 1 zinc-finger motif lies at 254–276 (YACHLCGRRFTLRSSLREHLQIH). A Phosphoserine modification is found at S341. K362 is covalently cross-linked (Glycyl lysine isopeptide (Lys-Gly) (interchain with G-Cter in SUMO2)). The C2H2-type 2 zinc finger occupies 363-385 (YECTICGRKFIQKSHWREHMYIH). Residues 390 to 410 (FKCSTCDKSFCRANQAARHVC) form a C2H2-type 3; atypical zinc finger. The C2H2-type 4; atypical zinc-finger motif lies at 448 to 468 (YKCNLCDKTFSTPNEVVKHSC). Residues K465, K505, and K506 each participate in a glycyl lysine isopeptide (Lys-Gly) (interchain with G-Cter in SUMO2) cross-link.

Its subcellular location is the nucleus. May be involved in transcriptional regulation. The protein is Zinc finger and BTB domain-containing protein 2 (ZBTB2) of Homo sapiens (Human).